A 730-amino-acid chain; its full sequence is MGRRKKMVERVTTLMNEPEKIRNIGIVAHIDHGKTTLSDNLLAGAGMISKELAGRQLFMDSDEEEQERGITIDASNVSMVHTYNNEDYLINLIDTPGHVDFGGDVTRAMRAVDGAVVVVDAVEGTMPQTETVLRQALREHVRPVLFVNKVDRLINELQVDSQEMQVRLGKVIDHVNKLIKNMNPEKFKAGWKVDAAAGTVAFGSALYNWAISVPMMQKTGISFTNVYDYCKAEDMKALAEKCPLHATVLDMVIRFLPNPLEAQKGRVPTIWHGDANSEIGKSMASANADGDLAFMVTDISIDPHAGEVATGRLFSGSFSRGMEVYISGTARKSRVQQVGIFMGPERLEVEKIPAGNIAAVTGLKDAIVGSTVTTLDGMTPFESIRHVSEPVVTVAVEAKHTKDLPKLVEVLRQVAKEDPTLQITLDEETGEHLMAGMGELHLEVIAHRIQRDKNVEITTSKPIVVYRETIKKKIEPVEGKSPNRHNRFYIYVEPLDTAIVEMIKSGDISMNLPELERRQKLIELGMGKEEAKGIVGIHNSNIFIDITKGIQYLNETMELILDGFEEVMRAGPLTREPVANMKCVLVDAKLHEDAIHRGPAQVIPAARQAIQAGMLMAEDCLLEPYQKVFVQVPQLTMGGATKELQGRRGIILNMTTEGDLAIIEARVPVAEMFGFAGEIRSATEGRAMWSTEFGGFDIVPTSIQTEVVGQIRERKGLKRDLPKASDYLSM.

Residues 19-260 (EKIRNIGIVA…MVIRFLPNPL (242 aa)) form the tr-type G domain. GTP-binding positions include 28-35 (AHIDHGKT), 94-98 (DTPGH), and 148-151 (NKVD). Diphthamide is present on His596.

This sequence belongs to the TRAFAC class translation factor GTPase superfamily. Classic translation factor GTPase family. EF-G/EF-2 subfamily.

It localises to the cytoplasm. In terms of biological role, catalyzes the GTP-dependent ribosomal translocation step during translation elongation. During this step, the ribosome changes from the pre-translocational (PRE) to the post-translocational (POST) state as the newly formed A-site-bound peptidyl-tRNA and P-site-bound deacylated tRNA move to the P and E sites, respectively. Catalyzes the coordinated movement of the two tRNA molecules, the mRNA and conformational changes in the ribosome. This chain is Elongation factor 2 (fusA), found in Methanosarcina thermophila.